Consider the following 177-residue polypeptide: Protein C2-DOMAIN ABA-RELATED 4 (177 aa).

One can recognise a C2 domain in the interval 4-118 (ACPARTSSLM…LRMQLDGLPS (115 aa)). The Ca(2+) site is built by Arg-33, Asp-34, Asp-39, Asp-85, His-86, Asp-87, and Asp-93.

The protein belongs to the plant CAR protein family. Dimers and oligomers. Binds to PYR/PYL/RCAR abscisic acid intracellular receptors in an ABA-independent manner, both at the plasma membrane and in the nucleus. Interacts directly with PYR1, PYL1, PYL4, PYL6 and PYL8. Binds phospholipids in a Ca(2+)-dependent manner. Interacts with YchF1. The cofactor is Ca(2+).

Its subcellular location is the cell membrane. It is found in the nucleus. The protein resides in the cytoplasm. It localises to the cytosol. Its function is as follows. Mediates the transient calcium-dependent interaction of PYR/PYL/RCAR abscisic acid (ABA) receptors with the plasma membrane and thus regulates ABA sensitivity. Stimulates the GTPase/ATPase activities of YchF1, and regulates its subcellular localization. Promotes tolerance towards salinity stress by limiting the accumulation of reactive oxygen species (ROS). Promotes resistance to bacterial pathogens (e.g. Xanthomonas oryzae pv. oryzae and P.syringae pv. tomato DC3000). Binds liposomes in the absence of exogenous Ca(2+), but this activity is enhanced in the presence of Ca(2+) and generates membrane curvature. This chain is Protein C2-DOMAIN ABA-RELATED 4, found in Arabidopsis thaliana (Mouse-ear cress).